Reading from the N-terminus, the 249-residue chain is Segregation and condensation protein A (249 aa).

Belongs to the ScpA family. As to quaternary structure, component of a cohesin-like complex composed of ScpA, ScpB and the Smc homodimer, in which ScpA and ScpB bind to the head domain of Smc. The presence of the three proteins is required for the association of the complex with DNA.

The protein resides in the cytoplasm. Functionally, participates in chromosomal partition during cell division. May act via the formation of a condensin-like complex containing Smc and ScpB that pull DNA away from mid-cell into both cell halves. The protein is Segregation and condensation protein A of Mycoplasmopsis pulmonis (strain UAB CTIP) (Mycoplasma pulmonis).